The primary structure comprises 153 residues: Large ribosomal subunit protein uL15 (153 aa).

The interval Met1–Ala42 is disordered. The span at Arg21–Cys31 shows a compositional bias: gly residues.

Belongs to the universal ribosomal protein uL15 family. In terms of assembly, part of the 50S ribosomal subunit.

Functionally, binds to the 23S rRNA. This Nitrosomonas eutropha (strain DSM 101675 / C91 / Nm57) protein is Large ribosomal subunit protein uL15.